Here is a 434-residue protein sequence, read N- to C-terminus: Putative magnesium transporter MRS2-D (434 aa).

Disordered regions lie at residues 1–21 (MAAR…AAGE), 126–171 (AASP…DGEA), and 279–311 (EASE…AGGG). Positions 9 to 21 (AAGAGAPAPAAGE) are enriched in low complexity. A compositionally biased stretch (basic and acidic residues) spans 279–291 (EASELEDHSSRDE). Helical transmembrane passes span 367-387 (GILL…TGVF) and 405-425 (FPCA…AALL).

This sequence belongs to the CorA metal ion transporter (MIT) (TC 1.A.35.5) family.

The protein resides in the membrane. In terms of biological role, putative magnesium transporter. This chain is Putative magnesium transporter MRS2-D (MRS2-D), found in Oryza sativa subsp. indica (Rice).